An 83-amino-acid chain; its full sequence is MLLPKISILLYILVVLQETAAVRGALFRSGRAVPFERVVGQQDFLRFGRAGMASGVGGGSEGGPDDVKNSYIRVNGEPEIVYQ.

An N-terminal signal peptide occupies residues 1–24 (MLLPKISILLYILVVLQETAAVRG). Positions 25–36 (ALFRSGRAVPFE) are excised as a propeptide. Phe-47 bears the Phenylalanine amide mark. The propeptide occupies 50–83 (AGMASGVGGGSEGGPDDVKNSYIRVNGEPEIVYQ).

Belongs to the FARP (FMRFamide related peptide) family. As to expression, each flp gene is expressed in a distinct set of neurons.

The protein resides in the secreted. In terms of biological role, FMRFamides and FMRFamide-like peptides are neuropeptides. The chain is FMRFamide-like neuropeptide 23 (flp-23) from Caenorhabditis elegans.